The following is a 246-amino-acid chain: Isoprenyl transferase (246 aa).

Residue Asp18 is part of the active site. Residue Asp18 participates in Mg(2+) binding. Residues 19 to 22 (GNGR), Trp23, Arg31, His35, and 63 to 65 (SAE) each bind substrate. Asn66 (proton acceptor) is an active-site residue. Residues Trp67, Arg69, Arg186, and 192–194 (RIS) each bind substrate. Glu205 contributes to the Mg(2+) binding site.

Belongs to the UPP synthase family. Homodimer. It depends on Mg(2+) as a cofactor.

Functionally, catalyzes the condensation of isopentenyl diphosphate (IPP) with allylic pyrophosphates generating different type of terpenoids. This is Isoprenyl transferase from Geobacter sulfurreducens (strain ATCC 51573 / DSM 12127 / PCA).